Here is a 294-residue protein sequence, read N- to C-terminus: MAESPLEIHVIADSTGETAVRLARAARSQFEGVHWHIVRHPMIGTVPEMVSALEAVSEAHEAGQWVCVVHTLVLPDMRRMVSDACEEMGIRELDLMGPMLEAMEEASGLDADAVPRRPVGVEADYFTRISAMEFAVRNDDGAIPDRLTEADICLVGVSRSGKTPLSIYLGYLGYKTVNVPLVPGIAPPTELAAVDRWRIVGLTIDAQRLLEIRGRRVRGLGGFGNEDGYADLAAIYEELDEVGKIQRRLGCPIIDTTGLALEESATKVIDVVDQRAKTAGTRLRKPAGSYRMRP.

G156 to T163 contributes to the ADP binding site.

It belongs to the pyruvate, phosphate/water dikinase regulatory protein family. PDRP subfamily.

It carries out the reaction N(tele)-phospho-L-histidyl/L-threonyl-[pyruvate, phosphate dikinase] + ADP = N(tele)-phospho-L-histidyl/O-phospho-L-threonyl-[pyruvate, phosphate dikinase] + AMP + H(+). The catalysed reaction is N(tele)-phospho-L-histidyl/O-phospho-L-threonyl-[pyruvate, phosphate dikinase] + phosphate + H(+) = N(tele)-phospho-L-histidyl/L-threonyl-[pyruvate, phosphate dikinase] + diphosphate. In terms of biological role, bifunctional serine/threonine kinase and phosphorylase involved in the regulation of the pyruvate, phosphate dikinase (PPDK) by catalyzing its phosphorylation/dephosphorylation. The polypeptide is Putative pyruvate, phosphate dikinase regulatory protein (Cutibacterium acnes (strain DSM 16379 / KPA171202) (Propionibacterium acnes)).